The chain runs to 344 residues: tRNA N6-adenosine threonylcarbamoyltransferase (344 aa).

H110 and H114 together coordinate Fe cation. Residues 133–137 (VVSGA), D166, G179, and N278 contribute to the substrate site. Fe cation is bound at residue D303.

The protein belongs to the KAE1 / TsaD family. It depends on Fe(2+) as a cofactor.

The protein localises to the cytoplasm. It carries out the reaction L-threonylcarbamoyladenylate + adenosine(37) in tRNA = N(6)-L-threonylcarbamoyladenosine(37) in tRNA + AMP + H(+). Required for the formation of a threonylcarbamoyl group on adenosine at position 37 (t(6)A37) in tRNAs that read codons beginning with adenine. Is involved in the transfer of the threonylcarbamoyl moiety of threonylcarbamoyl-AMP (TC-AMP) to the N6 group of A37, together with TsaE and TsaB. TsaD likely plays a direct catalytic role in this reaction. This chain is tRNA N6-adenosine threonylcarbamoyltransferase, found in Chlamydia pneumoniae (Chlamydophila pneumoniae).